The chain runs to 176 residues: dCTP deaminase (176 aa).

Residues 99-104 (RSTLAR) and D115 contribute to the dCTP site. E125 (proton donor/acceptor) is an active-site residue. Q163 serves as a coordination point for dCTP.

This sequence belongs to the dCTP deaminase family. In terms of assembly, homotrimer.

The enzyme catalyses dCTP + H2O + H(+) = dUTP + NH4(+). It participates in pyrimidine metabolism; dUMP biosynthesis; dUMP from dCTP (dUTP route): step 1/2. Catalyzes the deamination of dCTP to dUTP. The chain is dCTP deaminase from Pyrobaculum aerophilum (strain ATCC 51768 / DSM 7523 / JCM 9630 / CIP 104966 / NBRC 100827 / IM2).